A 545-amino-acid polypeptide reads, in one-letter code: Chaperonin GroEL (545 aa).

Residues 30-33, lysine 51, 87-91, glycine 415, 479-481, and aspartate 495 each bind ATP; these read TLGP, DGTTT, and NAA. The disordered stretch occupies residues 526 to 545; that stretch reads KEDKPDLGNAGAGGNMGGMM. Over residues 535 to 545 the composition is skewed to gly residues; it reads AGAGGNMGGMM.

This sequence belongs to the chaperonin (HSP60) family. In terms of assembly, forms a cylinder of 14 subunits composed of two heptameric rings stacked back-to-back. Interacts with the co-chaperonin GroES.

The protein localises to the cytoplasm. The catalysed reaction is ATP + H2O + a folded polypeptide = ADP + phosphate + an unfolded polypeptide.. Its function is as follows. Together with its co-chaperonin GroES, plays an essential role in assisting protein folding. The GroEL-GroES system forms a nano-cage that allows encapsulation of the non-native substrate proteins and provides a physical environment optimized to promote and accelerate protein folding. This is Chaperonin GroEL from Blochmanniella pennsylvanica (strain BPEN).